Here is a 354-residue protein sequence, read N- to C-terminus: MTDLKNDRYLRALLRQPVDITPVWMMRQAGRYLPEYKATRAQAGDFMSLCKNAELACEVTLQPLRRYALDAAILFSDILTIPDAMGLGLYFEAGEGPRFHSPITSHADVVKLPVPDPEQELGYVMNAVRTIRKNLAGEVPLIGFSGSPWTLATYMVEGGSSKAFTVIKKMMFAEPKTLHLLLDKLADSVILYLNAQIRAGAQAVMVFDTWGGALSGRDYKEFSLHYMHKIVDSLQRENEGRRVPVTLFTKGGGQWLEAMAETGCDALGLDWTSDIADARRRVGDKVALQGNMDPSMLYADPARIEQEVASILAGFGQGNGHVFNLGHGIHQDVPPEHAGVFVEAVHRLSRAYHA.

Substrate-binding positions include 27-31 (RQAGR), aspartate 77, tyrosine 154, threonine 209, and histidine 327.

This sequence belongs to the uroporphyrinogen decarboxylase family. As to quaternary structure, homodimer.

It is found in the cytoplasm. The enzyme catalyses uroporphyrinogen III + 4 H(+) = coproporphyrinogen III + 4 CO2. It participates in porphyrin-containing compound metabolism; protoporphyrin-IX biosynthesis; coproporphyrinogen-III from 5-aminolevulinate: step 4/4. In terms of biological role, catalyzes the decarboxylation of four acetate groups of uroporphyrinogen-III to yield coproporphyrinogen-III. In Pectobacterium atrosepticum (strain SCRI 1043 / ATCC BAA-672) (Erwinia carotovora subsp. atroseptica), this protein is Uroporphyrinogen decarboxylase.